The sequence spans 292 residues: GTP cyclohydrolase FolE2 (292 aa).

Belongs to the GTP cyclohydrolase IV family.

It carries out the reaction GTP + H2O = 7,8-dihydroneopterin 3'-triphosphate + formate + H(+). It participates in cofactor biosynthesis; 7,8-dihydroneopterin triphosphate biosynthesis; 7,8-dihydroneopterin triphosphate from GTP: step 1/1. In terms of biological role, converts GTP to 7,8-dihydroneopterin triphosphate. The protein is GTP cyclohydrolase FolE2 of Staphylococcus epidermidis (strain ATCC 12228 / FDA PCI 1200).